Here is a 189-residue protein sequence, read N- to C-terminus: MCDKIFHNLSGKTLVATPYVITKGIYHKSLIYMLSHTEEGAIGLIFNRLVNHVDLKSFFKIKEDKITSQVIVPIYLGGPIEHEKGFFLHSRDYNKNLLLDFHNDLAVSSNLEISEDIAFGQGPKNSLFIVGYTAWKPGQLEEELEKNLWLVMDCNKEFIFADNPENKWHNALKHLGIDEMYFSSQIGNA.

It belongs to the UPF0301 (AlgH) family.

This chain is UPF0301 protein RT0098, found in Rickettsia typhi (strain ATCC VR-144 / Wilmington).